Here is a 40-residue protein sequence, read N- to C-terminus: Alpha-conotoxin GIC (40 aa).

A propeptide spanning residues 1-20 (SDGRNDAAKAFDLISSTVKK) is cleaved from the precursor. Cystine bridges form between C22–C28 and C23–C36. The segment at 24-26 (SHP) is ser-Xaa-Pro motif, crucial for potent interaction with nAChR. C36 carries the post-translational modification Cysteine amide.

As to expression, expressed by the venom duct.

The protein resides in the secreted. Alpha-conotoxins bind to the nicotinic acetylcholine receptors (nAChR) and inhibit them. This toxin reversibly blocks neuronal nAChRs (alpha-3/beta-2 = alpha-6 or -3/beta-2 or -3 &gt; alpha-3/beta-4 = alpha-4/beta-2). In Conus geographus (Geography cone), this protein is Alpha-conotoxin GIC.